The sequence spans 342 residues: Phenylalanine--tRNA ligase alpha subunit (342 aa).

Glu-257 provides a ligand contact to Mg(2+).

The protein belongs to the class-II aminoacyl-tRNA synthetase family. Phe-tRNA synthetase alpha subunit type 1 subfamily. As to quaternary structure, tetramer of two alpha and two beta subunits. The cofactor is Mg(2+).

It localises to the cytoplasm. The catalysed reaction is tRNA(Phe) + L-phenylalanine + ATP = L-phenylalanyl-tRNA(Phe) + AMP + diphosphate + H(+). This is Phenylalanine--tRNA ligase alpha subunit from Legionella pneumophila subsp. pneumophila (strain Philadelphia 1 / ATCC 33152 / DSM 7513).